We begin with the raw amino-acid sequence, 607 residues long: Siderochrome iron transporter 2 (607 aa).

Residues 1–46 are disordered; that stretch reads MGLFGSFGARNKATPQVPPGAVAKAPEGTPKGPETNDQPDMDSSRL. The next 13 membrane-spanning stretches (helical) occupy residues 86-106, 129-149, 152-172, 180-200, 210-230, 242-262, 297-317, 326-346, 367-387, 404-424, 432-452, 459-479, and 499-519; these read VWAT…QSGI, ILSS…LNLW, AEGF…LAAC, AGYV…DVFV, AFTF…APLA, WAYG…AVVF, IIGA…FSLA, SAAF…FAAW, LGAC…DLYF, YMTQ…GLWV, HTCL…MIHF, IGYV…LVIG, and FIGL…AAIY. Residue asparagine 538 is glycosylated (N-linked (GlcNAc...) asparagine). A helical membrane pass occupies residues 573 to 593; it reads FGAVAATCILILGIPAIAVWK.

It belongs to the major facilitator superfamily.

It is found in the cell membrane. Its function is as follows. Major facilitator transporter involved in ferrichrome (FC) uptake. This Aspergillus fumigatus (strain ATCC MYA-4609 / CBS 101355 / FGSC A1100 / Af293) (Neosartorya fumigata) protein is Siderochrome iron transporter 2.